We begin with the raw amino-acid sequence, 548 residues long: Chaperonin GroEL (548 aa).

Residues Thr29–Pro32, Lys50, Asp86–Thr90, Gly416, and Asp497 each bind ATP.

Belongs to the chaperonin (HSP60) family. In terms of assembly, forms a cylinder of 14 subunits composed of two heptameric rings stacked back-to-back. Interacts with the co-chaperonin GroES.

It localises to the cytoplasm. The catalysed reaction is ATP + H2O + a folded polypeptide = ADP + phosphate + an unfolded polypeptide.. Its function is as follows. Together with its co-chaperonin GroES, plays an essential role in assisting protein folding. The GroEL-GroES system forms a nano-cage that allows encapsulation of the non-native substrate proteins and provides a physical environment optimized to promote and accelerate protein folding. The chain is Chaperonin GroEL from Neorickettsia risticii (Ehrlichia risticii).